A 1553-amino-acid chain; its full sequence is Probable serine/threonine-protein kinase qkgA (1553 aa).

The tract at residues 113–142 (SSSSSSSSTSSSPSLTSSPSSPISTSPPYH) is disordered. LRR repeat units lie at residues 287 to 309 (NGTF…INMC), 311 to 333 (QLVE…TELK), 334 to 356 (FLKN…CNLT), and 357 to 378 (LLKV…IVEL). Residues 395 to 619 (SCETWNKVKL…KRLIHESEKS (225 aa)) enclose the Roc domain. Disordered regions lie at residues 643–696 (NQGR…QQQQ), 955–1019 (ISNS…PSSQ), and 1048–1090 (NQNG…NNNK). Composition is skewed to low complexity over residues 648 to 675 (SISN…TSKK), 683 to 696 (SQQQ…QQQQ), 956 to 1018 (SNST…SPSS), and 1059 to 1090 (TTTT…NNNK). The region spanning 694 to 893 (QQQLQQSIKE…KTYWKDGVLL (200 aa)) is the COR domain. The 305-residue stretch at 1242 to 1546 (ILYERQIGEG…QTSYFDSPFL (305 aa)) folds into the Protein kinase domain. ATP contacts are provided by residues 1248–1256 (IGEGGFGLI) and Lys1271. The Proton acceptor role is filled by Asp1393.

The protein belongs to the protein kinase superfamily. TKL Ser/Thr protein kinase family. ROCO subfamily.

The catalysed reaction is L-seryl-[protein] + ATP = O-phospho-L-seryl-[protein] + ADP + H(+). It carries out the reaction L-threonyl-[protein] + ATP = O-phospho-L-threonyl-[protein] + ADP + H(+). Its function is as follows. Involved in growth, and during development, in aggregation. This Dictyostelium discoideum (Social amoeba) protein is Probable serine/threonine-protein kinase qkgA (qkgA-1).